We begin with the raw amino-acid sequence, 288 residues long: Acetyl-coenzyme A carboxylase carboxyl transferase subunit beta (288 aa).

The 255-residue stretch at 34 to 288 (LFAKCPACKH…HLVAFHGGGQ (255 aa)) folds into the CoA carboxyltransferase N-terminal domain. 4 residues coordinate Zn(2+): cysteine 38, cysteine 41, cysteine 56, and cysteine 59. A C4-type zinc finger spans residues 38–59 (CPACKHMIYKKDLGLAKICPTC).

It belongs to the AccD/PCCB family. Acetyl-CoA carboxylase is a heterohexamer composed of biotin carboxyl carrier protein (AccB), biotin carboxylase (AccC) and two subunits each of ACCase subunit alpha (AccA) and ACCase subunit beta (AccD). Zn(2+) serves as cofactor.

The protein localises to the cytoplasm. It catalyses the reaction N(6)-carboxybiotinyl-L-lysyl-[protein] + acetyl-CoA = N(6)-biotinyl-L-lysyl-[protein] + malonyl-CoA. It participates in lipid metabolism; malonyl-CoA biosynthesis; malonyl-CoA from acetyl-CoA: step 1/1. In terms of biological role, component of the acetyl coenzyme A carboxylase (ACC) complex. Biotin carboxylase (BC) catalyzes the carboxylation of biotin on its carrier protein (BCCP) and then the CO(2) group is transferred by the transcarboxylase to acetyl-CoA to form malonyl-CoA. The sequence is that of Acetyl-coenzyme A carboxylase carboxyl transferase subunit beta from Streptococcus pyogenes serotype M6 (strain ATCC BAA-946 / MGAS10394).